A 388-amino-acid chain; its full sequence is Small ribosomal subunit protein uS3m (388 aa).

This sequence belongs to the universal ribosomal protein uS3 family.

It is found in the mitochondrion. Its function is as follows. Essential for mitochondrial protein synthesis and required for the maturation of small ribosomal subunits. In Kluyveromyces lactis (strain ATCC 8585 / CBS 2359 / DSM 70799 / NBRC 1267 / NRRL Y-1140 / WM37) (Yeast), this protein is Small ribosomal subunit protein uS3m (VAR1).